The sequence spans 990 residues: TonB-dependent receptor P26 (990 aa).

The TonB box motif lies at 86–93 (DEVVVIGY). The region spanning 97–213 (RKSDLTGSVS…ANGVVLVTTK (117 aa)) is the TBDR plug domain. The TBDR beta-barrel domain occupies 220-990 (SSKPEVSANI…TITLGLNVTF (771 aa)). Residues 878 to 902 (TPENPTSDIPRAGGDSVTGTPPNSA) form a disordered region. Positions 974-990 (GSYPNPRTITLGLNVTF) match the TonB C-terminal box motif.

Belongs to the TonB-dependent receptor family.

It localises to the cell outer membrane. In terms of biological role, tonB-dependent receptor probably involved in ulvan degradation. Ulvan is the main polysaccharide component of the Ulvales (green seaweed) cell wall. It is composed of disaccharide building blocks comprising 3-sulfated rhamnose (Rha3S) linked to D-glucuronic acid (GlcA), L-iduronic acid (IduA), or D-xylose (Xyl). The TonB-dependent receptor may mediate transport of ulvan oligosaccharides from the surface of the outer membrane to the periplasm for subsequent degradation. This is TonB-dependent receptor P26 from Formosa agariphila (strain DSM 15362 / KCTC 12365 / LMG 23005 / KMM 3901 / M-2Alg 35-1).